The primary structure comprises 94 residues: Host-modulation protein 11K (94 aa).

In terms of assembly, interacts with host GRB2; this interaction alters host cell environment by modulating host signaling pathways.

It localises to the host cytoplasm. Its function is as follows. Enhances viral DNA replication and virion release. Mechansitically, optimizes viral DNA replication by interacting with host GRB2 to inhibit the negative effect of ERK signaling on B19 viral replication. Plays a role in viral infectivity. Induces apoptosis of primary erythroid progenitor cells. This chain is Host-modulation protein 11K (11K), found in Human parvovirus B19 (strain HV) (HPV B19).